Consider the following 248-residue polypeptide: Small ribosomal subunit protein uS3 (248 aa).

The region spanning 39 to 111 (IRKYLNKVYK…EIVFNVVEVK (73 aa)) is the KH type-2 domain. The tract at residues 222–248 (KPFEASAPRPQRRNRKEANNYVNAKKN) is disordered.

This sequence belongs to the universal ribosomal protein uS3 family. In terms of assembly, part of the 30S ribosomal subunit. Forms a tight complex with proteins S10 and S14.

Functionally, binds the lower part of the 30S subunit head. Binds mRNA in the 70S ribosome, positioning it for translation. In Alteracholeplasma palmae (strain ATCC 49389 / J233) (Acholeplasma palmae), this protein is Small ribosomal subunit protein uS3.